The primary structure comprises 419 residues: Light-independent protochlorophyllide reductase subunit N (419 aa).

Residues Cys20, Cys45, and Cys102 each coordinate [4Fe-4S] cluster.

Belongs to the BchN/ChlN family. Protochlorophyllide reductase is composed of three subunits; BchL, BchN and BchB. Forms a heterotetramer of two BchB and two BchN subunits. It depends on [4Fe-4S] cluster as a cofactor.

It catalyses the reaction chlorophyllide a + oxidized 2[4Fe-4S]-[ferredoxin] + 2 ADP + 2 phosphate = protochlorophyllide a + reduced 2[4Fe-4S]-[ferredoxin] + 2 ATP + 2 H2O. Its pathway is porphyrin-containing compound metabolism; bacteriochlorophyll biosynthesis (light-independent). Functionally, component of the dark-operative protochlorophyllide reductase (DPOR) that uses Mg-ATP and reduced ferredoxin to reduce ring D of protochlorophyllide (Pchlide) to form chlorophyllide a (Chlide). This reaction is light-independent. The NB-protein (BchN-BchB) is the catalytic component of the complex. The chain is Light-independent protochlorophyllide reductase subunit N from Chlorobaculum tepidum (strain ATCC 49652 / DSM 12025 / NBRC 103806 / TLS) (Chlorobium tepidum).